The primary structure comprises 463 residues: Glutamate--tRNA ligase 2 (463 aa).

Positions 11–21 (PSPTGYLHIGG) match the 'HIGH' region motif. The 'KMSKS' region motif lies at 240-244 (KLSKR). Lys243 provides a ligand contact to ATP.

It belongs to the class-I aminoacyl-tRNA synthetase family. Glutamate--tRNA ligase type 1 subfamily. Monomer.

Its subcellular location is the cytoplasm. It catalyses the reaction tRNA(Glu) + L-glutamate + ATP = L-glutamyl-tRNA(Glu) + AMP + diphosphate. In terms of biological role, catalyzes the attachment of glutamate to tRNA(Glu) in a two-step reaction: glutamate is first activated by ATP to form Glu-AMP and then transferred to the acceptor end of tRNA(Glu). The polypeptide is Glutamate--tRNA ligase 2 (Campylobacter jejuni subsp. jejuni serotype O:2 (strain ATCC 700819 / NCTC 11168)).